Reading from the N-terminus, the 993-residue chain is DNA-binding protein SMUBP-2 (993 aa).

Ala-2 carries the post-translational modification N-acetylalanine. Residues 214 to 221 (GPPGTGKT), Gln-403, Tyr-442, and Glu-571 contribute to the ATP site. The SS DNA-binding stretch occupies residues 638-785 (TAFEYLDDIV…KRRFITVSKR (148 aa)). Disordered regions lie at residues 651 to 723 (YSHE…VESQ), 782 to 828 (VSKR…PDQP), and 841 to 879 (VRSA…DLPT). Polar residues-rich tracts occupy residues 653–662 (HENSQGSSHA) and 669–681 (PATS…QRQE). One can recognise an R3H domain in the interval 723-786 (QDGVDHFRAM…RRFITVSKRA (64 aa)). The segment covering 818–828 (PPREQRGPDQP) has biased composition (basic and acidic residues). Residues 842-859 (RSAQGQPASKEQQASGQQ) show a composition bias toward polar residues. Residues 864-868 (KKKKK) carry the Nuclear localization signal motif. Residues 891–940 (VKADNTCGFAKCTAGVTTLGQFCQLCSRRYCLSHHLPEIHGCGERARAHA) form an AN1-type zinc finger. The Zn(2+) site is built by Cys-897, Cys-902, Cys-913, Cys-916, Cys-921, His-924, His-930, and Cys-932. Positions 971–993 (RRLDKKLSELSNQRTSRRKERGT) are disordered.

Belongs to the DNA2/NAM7 helicase family. As to quaternary structure, homooligomer. Interacts with RUVBL1. Interacts with RUVBL2. Interacts with GTF3C1. Interacts with ABT1. Interacts with ribosomes. In terms of tissue distribution, expressed in all tissues examined. Expressed in the developing and adult human brain, with highest expression in the cerebellum. Moderately expressed in fibroblasts.

The protein resides in the nucleus. Its subcellular location is the cytoplasm. It is found in the cell projection. The protein localises to the axon. It catalyses the reaction ATP + H2O = ADP + phosphate + H(+). Functionally, 5' to 3' helicase that unwinds RNA and DNA duplexes in an ATP-dependent reaction. Specific to 5'-phosphorylated single-stranded guanine-rich sequences. May play a role in RNA metabolism, ribosome biogenesis or initiation of translation. May play a role in regulation of transcription. Interacts with tRNA-Tyr. The polypeptide is DNA-binding protein SMUBP-2 (IGHMBP2) (Homo sapiens (Human)).